A 342-amino-acid polypeptide reads, in one-letter code: S-adenosylmethionine:tRNA ribosyltransferase-isomerase (342 aa).

It belongs to the QueA family. In terms of assembly, monomer.

Its subcellular location is the cytoplasm. The catalysed reaction is 7-aminomethyl-7-carbaguanosine(34) in tRNA + S-adenosyl-L-methionine = epoxyqueuosine(34) in tRNA + adenine + L-methionine + 2 H(+). It participates in tRNA modification; tRNA-queuosine biosynthesis. In terms of biological role, transfers and isomerizes the ribose moiety from AdoMet to the 7-aminomethyl group of 7-deazaguanine (preQ1-tRNA) to give epoxyqueuosine (oQ-tRNA). This is S-adenosylmethionine:tRNA ribosyltransferase-isomerase from Listeria monocytogenes serovar 1/2a (strain ATCC BAA-679 / EGD-e).